The sequence spans 238 residues: MGKHAENGNAAAERPRFFGRRQGKALRRNALGLIEDLLPRLTVAVPEPDERVEPALLFPGAVRSVWLEVGFGGGEHLAQLAEDNPDIGLIGCEVFRNGIASLLGHVQARQLGNNVRVFPEDVRLLLPALPDGSLGRVFVLFPDPWPKTRHADRRFISPETLDVLARVLESGGELRVASDDPIYVAWAARHLDAHPAFEKILATADRSAVPADWPATRYEQKCITGRAPVFFLYRRRAR.

Residues Glu68, Glu93, Asp121, and Asp143 each coordinate S-adenosyl-L-methionine. Asp143 is an active-site residue. Substrate is bound by residues Lys147, Asp179, and 216 to 219; that span reads TRYE.

It belongs to the class I-like SAM-binding methyltransferase superfamily. TrmB family.

The catalysed reaction is guanosine(46) in tRNA + S-adenosyl-L-methionine = N(7)-methylguanosine(46) in tRNA + S-adenosyl-L-homocysteine. The protein operates within tRNA modification; N(7)-methylguanine-tRNA biosynthesis. In terms of biological role, catalyzes the formation of N(7)-methylguanine at position 46 (m7G46) in tRNA. This Paramagnetospirillum magneticum (strain ATCC 700264 / AMB-1) (Magnetospirillum magneticum) protein is tRNA (guanine-N(7)-)-methyltransferase.